A 555-amino-acid polypeptide reads, in one-letter code: Putative polyketide hydroxylase (555 aa).

Residues 16–45 (PVLV…LVER) and 303–313 (YRAGRVFLAGD) contribute to the FAD site. Residues 366 to 395 (ATTARAAARSAEHSHPGFAPPPGTSGGPQG) form a disordered region.

The protein belongs to the PheA/TfdB FAD monooxygenase family. FAD serves as cofactor.

In terms of biological role, involved in developmentally regulated synthesis of a compound biosynthetically related to polyketide antibiotics which is essential for spore color in Streptomyces halstedii. This is Putative polyketide hydroxylase (schC) from Streptomyces halstedii.